Here is a 1257-residue protein sequence, read N- to C-terminus: Receptor tyrosine-protein kinase erbB-2 (1257 aa).

Positions 1-22 (MELAAWCRWGFLLALLPPGIAG) are cleaved as a signal peptide. Residues 23–654 (TQVCTGTDMK…PAEQRASPVT (632 aa)) are Extracellular-facing. C26 and C53 form a disulfide bridge. N68 and N188 each carry an N-linked (GlcNAc...) asparagine glycan. 16 cysteine pairs are disulfide-bonded: C163-C193, C196-C205, C200-C213, C221-C228, C225-C236, C237-C245, C241-C253, C256-C265, C269-C296, C300-C312, C316-C332, C335-C339, C343-C368, C476-C506, C513-C522, and C517-C530. N260 is a glycosylation site (N-linked (GlcNAc...) asparagine). Residue N532 is glycosylated (N-linked (GlcNAc...) asparagine). Cystine bridges form between C533–C542, C546–C562, C565–C578, C569–C586, C589–C598, C602–C625, C628–C636, and C632–C644. Residue N573 is glycosylated (N-linked (GlcNAc...) asparagine). N631 carries an N-linked (GlcNAc...) asparagine glycan. A helical transmembrane segment spans residues 655–677 (FIIATVVGVLLFLILVVVVGILI). The segment at 678–691 (KRRRQKIRKYTMRR) is required for interaction with KPNB1 and EEA1. Positions 678 to 691 (KRRRQKIRKYTMRR) match the Nuclear localization signal motif. Residues 678-1257 (KRRRQKIRKY…PEYLGLDVPV (580 aa)) are Cytoplasmic-facing. The 268-residue stretch at 722–989 (LRKVKVLGSG…RMARDPQRFV (268 aa)) folds into the Protein kinase domain. ATP-binding positions include 728 to 736 (LGSGAFGTV) and K755. Catalysis depends on D847, which acts as the Proton acceptor. The residue at position 879 (Y879) is a Phosphotyrosine. Residues 1029 to 1181 (QQGFFSPDPT…PKTLSPGKNG (153 aa)) are disordered. 4 positions are modified to phosphoserine: S1056, S1080, S1085, and S1109. Y1114 carries the phosphotyrosine modification. Y1141 carries the phosphotyrosine; by autocatalysis modification. Residues 1149–1163 (PQPPLTPEGPLPPVR) are compositionally biased toward pro residues. T1168 carries the phosphothreonine modification. The segment at 1197–1199 (EYL) is interaction with PIK3C2B. Y1198 carries the post-translational modification Phosphotyrosine. Residues 1200–1257 (VPREGTASPPHPSPAFSPAFDNLYYWDQNSSEQGPPPSNFEGTPTAENPEYLGLDVPV) form a disordered region. Residue Y1250 is modified to Phosphotyrosine; by autocatalysis.

Belongs to the protein kinase superfamily. Tyr protein kinase family. EGF receptor subfamily. As to quaternary structure, homodimer. Heterodimer with EGFR, ERBB3 and ERBB4. Part of a complex with EGFR and either PIK3C2A or PIK3C2B. May interact with PIK3C2B when phosphorylated on Tyr-1198. Interacts with PRKCABP and PLXNB1. Interacts (when phosphorylated on Tyr-1250) with MEMO1. Interacts with MUC1. Interacts (when phosphorylated on Tyr-1141) with GRB7 (via SH2 domain). Interacts (when phosphorylated on Tyr-1250) with ERBIN Interacts with SRC, KPNB1, RANBP2, EEA1, CRM1, CLTC, PTK6, RPA194, MYOC and ACTB. Interacts with HSP90AA1 and HSP90AB1; the interaction suppresses ERBB2 kinase activity. Interacts with SORL1; this interaction regulates ERBB2 subcellular distribution by promoting its recycling after internalization from endosomes back to the plasma membrane, hence stimulates ERBB2-mediated signaling. Interacts with SH3BGRL. Interacts with ROR1. Autophosphorylated. Autophosphorylation occurs in trans, i.e. one subunit of the dimeric receptor phosphorylates tyrosine residues on the other subunit. Ligand-binding increases phosphorylation on tyrosine residues. Signaling via SEMA4C promotes phosphorylation at Tyr-1250. Dephosphorylated by PTPN12.

The protein localises to the cell membrane. It localises to the cell projection. It is found in the ruffle membrane. The protein resides in the early endosome. Its subcellular location is the cytoplasm. The protein localises to the perinuclear region. It localises to the nucleus. It carries out the reaction L-tyrosyl-[protein] + ATP = O-phospho-L-tyrosyl-[protein] + ADP + H(+). In terms of biological role, protein tyrosine kinase that is part of several cell surface receptor complexes, but that apparently needs a coreceptor for ligand binding. Essential component of a neuregulin-receptor complex, although neuregulins do not interact with it alone. GP30 is a potential ligand for this receptor. Regulates outgrowth and stabilization of peripheral microtubules (MTs). Upon ERBB2 activation, the MEMO1-RHOA-DIAPH1 signaling pathway elicits the phosphorylation and thus the inhibition of GSK3B at cell membrane. This prevents the phosphorylation of APC and CLASP2, allowing its association with the cell membrane. In turn, membrane-bound APC allows the localization of MACF1 to the cell membrane, which is required for microtubule capture and stabilization. Interacts (preferentially with the tyrosine phosphorylated form) with CPNE3; this interaction occurs at the cell membrane and is increased in a growth factor heregulin-dependent manner. Its function is as follows. In the nucleus is involved in transcriptional regulation. Associates with the 5'-TCAAATTC-3' sequence in the PTGS2/COX-2 promoter and activates its transcription. Implicated in transcriptional activation of CDKN1A; the function involves STAT3 and SRC. Involved in the transcription of rRNA genes by RNA Pol I and enhances protein synthesis and cell growth. In Rattus norvegicus (Rat), this protein is Receptor tyrosine-protein kinase erbB-2 (Erbb2).